Reading from the N-terminus, the 391-residue chain is uncharacterized protein (391 aa).

The protein belongs to the mycobacterial PPE family.

This is an uncharacterized protein from Mycobacterium tuberculosis (strain CDC 1551 / Oshkosh).